We begin with the raw amino-acid sequence, 83 residues long: Small ribosomal subunit protein uS19m (83 aa).

This sequence belongs to the universal ribosomal protein uS19 family.

The protein localises to the mitochondrion. The chain is Small ribosomal subunit protein uS19m (RPS19) from Tetraselmis subcordiformis (Marine green alga).